A 63-amino-acid polypeptide reads, in one-letter code: Anionic peptide 10.1 (63 aa).

Residues Met-1–Ala-20 form the signal peptide.

The protein belongs to the non-disulfide-bridged peptide (NDBP) superfamily. Long chain multifunctional peptide (group 2) family. As to expression, expressed by the venom gland.

Its subcellular location is the secreted. In Lychas mucronatus (Chinese swimming scorpion), this protein is Anionic peptide 10.1.